A 160-amino-acid chain; its full sequence is Small ribosomal subunit protein bS6 (160 aa).

This sequence belongs to the bacterial ribosomal protein bS6 family.

Binds together with bS18 to 16S ribosomal RNA. The chain is Small ribosomal subunit protein bS6 from Ureaplasma parvum serovar 3 (strain ATCC 27815 / 27 / NCTC 11736).